Consider the following 154-residue polypeptide: MLSCWVLLLALLGGVCALPAPLSYPQALIQAVDSYNQRPEVQNAFRLLSADPEPGPGVDLSTLRALNFTIMETECTPSARLPVDDCDFKENGVIRDCSGPVSVLQDTPEINLRCRDASSDPVLVQRGRFGRFLRKIRRFRPKVTITIQGSARFG.

An N-terminal signal peptide occupies residues Met1–Ala17. Positions Leu18 to Val122 are excised as a propeptide. 2 cysteine pairs are disulfide-bonded: Cys75/Cys86 and Cys97/Cys114.

This sequence belongs to the cathelicidin family. As to expression, detected in trachea, lung, proventriculus, duodenum, jejunum, ileum, caeca, colon, caecal tonsil, bursa of Fabricius, kidney, ovary, testis, thymus, liver, spleen, bone marrow, skin, uropygial gland, muscle and brain.

It localises to the secreted. Its function is as follows. Binds bacterial lipopolysaccharide (LPS). Has potent antimicrobial activity against Gram-positive and Gram-negative bacteria (in vitro). Has hemolytic activity (in vitro). May play a role in the innate immune response. The sequence is that of Cathelicidin-2 (CATHL2) from Gallus gallus (Chicken).